The primary structure comprises 153 residues: ATP synthase subunit b' (153 aa).

A helical transmembrane segment spans residues 23-40; it reads LMAIQVVALTYILNSLFF.

The protein belongs to the ATPase B chain family. F-type ATPases have 2 components, F(1) - the catalytic core - and F(0) - the membrane proton channel. F(1) has five subunits: alpha(3), beta(3), gamma(1), delta(1), epsilon(1). F(0) has four main subunits: a(1), b(1), b'(1) and c(10-14). The alpha and beta chains form an alternating ring which encloses part of the gamma chain. F(1) is attached to F(0) by a central stalk formed by the gamma and epsilon chains, while a peripheral stalk is formed by the delta, b and b' chains.

It localises to the cellular thylakoid membrane. Functionally, f(1)F(0) ATP synthase produces ATP from ADP in the presence of a proton or sodium gradient. F-type ATPases consist of two structural domains, F(1) containing the extramembraneous catalytic core and F(0) containing the membrane proton channel, linked together by a central stalk and a peripheral stalk. During catalysis, ATP synthesis in the catalytic domain of F(1) is coupled via a rotary mechanism of the central stalk subunits to proton translocation. Component of the F(0) channel, it forms part of the peripheral stalk, linking F(1) to F(0). The b'-subunit is a diverged and duplicated form of b found in plants and photosynthetic bacteria. The chain is ATP synthase subunit b' from Prochlorococcus marinus (strain MIT 9301).